The primary structure comprises 220 residues: Vesicle-associated membrane protein 7 (220 aa).

The Cytoplasmic segment spans residues 2 to 188; sequence AILFAVVARG…ARAMCMKNLK (187 aa). The 104-residue stretch at 7–110 folds into the Longin domain; sequence VVARGTTILA…AMNSEFSSVL (104 aa). The 61-residue stretch at 125–185 folds into the v-SNARE coiled-coil homology domain; the sequence is QVAETQAQVD…RNLARAMCMK (61 aa). A helical; Anchor for type IV membrane protein transmembrane segment spans residues 189–209; sequence LTIIIIIVSIVIIYIIVSAAC. Residues 210 to 220 lie on the Vesicular side of the membrane; the sequence is GGLAWPSCVQK.

The protein belongs to the synaptobrevin family.

It is found in the cytoplasmic vesicle. The protein resides in the secretory vesicle membrane. The protein localises to the golgi apparatus. It localises to the trans-Golgi network membrane. Its subcellular location is the late endosome membrane. It is found in the lysosome membrane. The protein resides in the endoplasmic reticulum membrane. The protein localises to the phagosome membrane. It localises to the synapse. Its subcellular location is the synaptosome. Involved in the targeting and/or fusion of transport vesicles to their target membrane during transport of proteins from the early endosome to the lysosome. Required for heterotypic fusion of late endosomes with lysosomes and homotypic lysosomal fusion. Required for calcium regulated lysosomal exocytosis. Involved in the export of chylomicrons from the endoplasmic reticulum to the cis Golgi. Required for focal exocytosis of late endocytic vesicles during phagosome formation. This is Vesicle-associated membrane protein 7 from Gallus gallus (Chicken).